The chain runs to 194 residues: Protein GrpE 1 (194 aa).

The interval 1 to 22 is disordered; that stretch reads MIHNEEEQLEKKIEKNQDPKIN.

Belongs to the GrpE family. As to quaternary structure, homodimer.

It is found in the cytoplasm. Functionally, participates actively in the response to hyperosmotic and heat shock by preventing the aggregation of stress-denatured proteins, in association with DnaK and GrpE. It is the nucleotide exchange factor for DnaK and may function as a thermosensor. Unfolded proteins bind initially to DnaJ; upon interaction with the DnaJ-bound protein, DnaK hydrolyzes its bound ATP, resulting in the formation of a stable complex. GrpE releases ADP from DnaK; ATP binding to DnaK triggers the release of the substrate protein, thus completing the reaction cycle. Several rounds of ATP-dependent interactions between DnaJ, DnaK and GrpE are required for fully efficient folding. In Buchnera aphidicola subsp. Acyrthosiphon pisum (strain APS) (Acyrthosiphon pisum symbiotic bacterium), this protein is Protein GrpE 1.